The following is a 126-amino-acid chain: Histone H2B type 1-H (126 aa).

Residues 1–12 (MPDPAKSAPAPK) are compositionally biased toward low complexity. The disordered stretch occupies residues 1–36 (MPDPAKSAPAPKKGSKKAVTKAQKKDGKKRKRSRKE). At Pro2 the chain carries N-acetylproline. Lys6 is modified (N6-(2-hydroxyisobutyryl)lysine; alternate). Lys6 bears the N6-(beta-hydroxybutyryl)lysine; alternate mark. The residue at position 6 (Lys6) is an N6-acetyllysine; alternate. Lys6 bears the N6-butyryllysine; alternate mark. An N6-crotonyllysine; alternate modification is found at Lys6. N6-lactoyllysine; alternate is present on Lys6. Residue Lys6 forms a Glycyl lysine isopeptide (Lys-Gly) (interchain with G-Cter in SUMO2); alternate linkage. ADP-ribosylserine is present on Ser7. The residue at position 12 (Lys12) is an N6-(beta-hydroxybutyryl)lysine; alternate. 2 positions are modified to N6-acetyllysine; alternate: Lys12 and Lys13. N6-crotonyllysine; alternate occurs at positions 12 and 13. Lys12 carries the N6-lactoyllysine; alternate modification. The residue at position 13 (Lys13) is an N6-(2-hydroxyisobutyryl)lysine; alternate. A Phosphoserine; by STK4/MST1 modification is found at Ser15. 4 positions are modified to N6-acetyllysine; alternate: Lys16, Lys17, Lys21, and Lys24. Residues Lys16, Lys17, Lys21, and Lys24 each carry the N6-crotonyllysine; alternate modification. 4 positions are modified to N6-lactoyllysine; alternate: Lys16, Lys17, Lys21, and Lys24. N6-(beta-hydroxybutyryl)lysine; alternate occurs at positions 17 and 21. Lys17 bears the N6-glutaryllysine; alternate mark. An N6-(2-hydroxyisobutyryl)lysine; alternate mark is found at Lys21 and Lys24. An N6-butyryllysine; alternate modification is found at Lys21. Residue Lys21 forms a Glycyl lysine isopeptide (Lys-Gly) (interchain with G-Cter in SUMO2); alternate linkage. Residue Lys25 is modified to N6-(2-hydroxyisobutyryl)lysine. An N6-(2-hydroxyisobutyryl)lysine; alternate modification is found at Lys35. Residue Lys35 is modified to N6-(beta-hydroxybutyryl)lysine; alternate. Residue Lys35 is modified to N6-crotonyllysine; alternate. Lys35 is subject to N6-glutaryllysine; alternate. Position 35 is an N6-succinyllysine; alternate (Lys35). Lys35 is covalently cross-linked (Glycyl lysine isopeptide (Lys-Gly) (interchain with G-Cter in ubiquitin); alternate). The residue at position 36 (Glu36) is a PolyADP-ribosyl glutamic acid. At Ser37 the chain carries Phosphoserine; by AMPK. 3 positions are modified to N6-(2-hydroxyisobutyryl)lysine; alternate: Lys44, Lys47, and Lys58. Position 44 is an N6-lactoyllysine; alternate (Lys44). N6-glutaryllysine; alternate is present on residues Lys44 and Lys47. Lys47 is modified (N6-methyllysine; alternate). At Lys58 the chain carries N6,N6-dimethyllysine; alternate. Position 80 is a dimethylated arginine (Arg80). N6-(2-hydroxyisobutyryl)lysine; alternate is present on Lys86. N6-(beta-hydroxybutyryl)lysine; alternate is present on Lys86. Lys86 bears the N6-acetyllysine; alternate mark. Lys86 carries the N6-lactoyllysine; alternate modification. Lys86 is modified (N6,N6,N6-trimethyllysine; alternate). Arg87 and Arg93 each carry omega-N-methylarginine. Lys109 is subject to N6-(2-hydroxyisobutyryl)lysine; alternate. N6-lactoyllysine; alternate is present on Lys109. Lys109 carries the post-translational modification N6-glutaryllysine; alternate. N6-methyllysine; alternate is present on Lys109. O-linked (GlcNAc) serine glycosylation is present at Ser113. Residue Thr116 is modified to Phosphothreonine. N6-(2-hydroxyisobutyryl)lysine; alternate occurs at positions 117 and 121. An N6-(beta-hydroxybutyryl)lysine; alternate mark is found at Lys117 and Lys121. N6-lactoyllysine; alternate occurs at positions 117 and 121. N6-glutaryllysine; alternate occurs at positions 117 and 121. 2 positions are modified to N6-succinyllysine; alternate: Lys117 and Lys121. Position 117 is an N6-malonyllysine; alternate (Lys117). An N6-methylated lysine; alternate modification is found at Lys117. Residue Lys121 forms a Glycyl lysine isopeptide (Lys-Gly) (interchain with G-Cter in ubiquitin); alternate linkage.

The protein belongs to the histone H2B family. As to quaternary structure, the nucleosome is a histone octamer containing two molecules each of H2A, H2B, H3 and H4 assembled in one H3-H4 heterotetramer and two H2A-H2B heterodimers. The octamer wraps approximately 147 bp of DNA. Found in a complex with PPAR9; DTX3L AND STAT1; the interaction is likely to induce DTX3L-mediated ubiquitination of H2BC9/H2BJ. Monoubiquitination at Lys-35 (H2BK34Ub) by the MSL1/MSL2 dimer is required for histone H3 'Lys-4' (H3K4me) and 'Lys-79' (H3K79me) methylation and transcription activation at specific gene loci, such as HOXA9 and MEIS1 loci. Similarly, monoubiquitination at Lys-121 (H2BK120Ub) by the RNF20/40 complex gives a specific tag for epigenetic transcriptional activation and is also prerequisite for histone H3 'Lys-4' and 'Lys-79' methylation. It also functions cooperatively with the FACT dimer to stimulate elongation by RNA polymerase II. H2BK120Ub also acts as a regulator of mRNA splicing: deubiquitination by USP49 is required for efficient cotranscriptional splicing of a large set of exons. Monoubiquitinated by DTX3L upon encephalomyocarditis virus (EMCV)-mediated infection. Post-translationally, phosphorylation at Ser-37 (H2BS36ph) by AMPK in response to stress promotes transcription. Phosphorylated on Ser-15 (H2BS14ph) by STK4/MST1 during apoptosis; which facilitates apoptotic chromatin condensation. Also phosphorylated on Ser-15 in response to DNA double strand breaks (DSBs), and in correlation with somatic hypermutation and immunoglobulin class-switch recombination. In terms of processing, glcNAcylation at Ser-113 promotes monoubiquitination of Lys-121. It fluctuates in response to extracellular glucose, and associates with transcribed genes. ADP-ribosylated by PARP1 or PARP2 on Ser-7 (H2BS6ADPr) in response to DNA damage. H2BS6ADPr promotes recruitment of CHD1L. Poly ADP-ribosylation on Glu-36 (H2BE35ADPr) by PARP1 regulates adipogenesis: it inhibits phosphorylation at Ser-37 (H2BS36ph), thereby blocking expression of pro-adipogenetic genes. Post-translationally, crotonylation (Kcr) is specifically present in male germ cells and marks testis-specific genes in post-meiotic cells, including X-linked genes that escape sex chromosome inactivation in haploid cells. Crotonylation marks active promoters and enhancers and confers resistance to transcriptional repressors. It is also associated with post-meiotically activated genes on autosomes. In terms of processing, lactylated in macrophages by EP300/P300 by using lactoyl-CoA directly derived from endogenous or exogenous lactate, leading to stimulates gene transcription.

Its subcellular location is the nucleus. The protein resides in the chromosome. In terms of biological role, core component of nucleosome. Nucleosomes wrap and compact DNA into chromatin, limiting DNA accessibility to the cellular machineries which require DNA as a template. Histones thereby play a central role in transcription regulation, DNA repair, DNA replication and chromosomal stability. DNA accessibility is regulated via a complex set of post-translational modifications of histones, also called histone code, and nucleosome remodeling. The polypeptide is Histone H2B type 1-H (Homo sapiens (Human)).